The following is a 274-amino-acid chain: MYPLTSDIASITSTQNPLVKQLRQLHQTKGRKQQGQLLLEGTHLLEVALAQGKGFNHGCFTAMWQEKNPVLADRLMAQSVHSYLVSGEVLAKMASTVNPDGVVATLTMDQFWRSPPPHARLGLVLERLQDPGNLGTILRTAAATGVEGIWLTADCVDPTSPKVLRSSAGSSLLLPQQQLQSLPPLLEKFHTQGLQLIATVPQATQTLWEIDFQRPTIVIFGSEGQGLSAPVLELTTHQVAIPQAPQVESLNVAIAVGVMLYEARRQQWAASTPG.

This sequence belongs to the class IV-like SAM-binding methyltransferase superfamily. RNA methyltransferase TrmH family.

This is an uncharacterized protein from Synechocystis sp. (strain ATCC 27184 / PCC 6803 / Kazusa).